A 160-amino-acid polypeptide reads, in one-letter code: Cyclic pyranopterin monophosphate synthase (160 aa).

Residues 76 to 78 (LCH) and 114 to 115 (ME) each bind substrate. Asp129 is a catalytic residue.

Belongs to the MoaC family. Homohexamer; trimer of dimers.

It carries out the reaction (8S)-3',8-cyclo-7,8-dihydroguanosine 5'-triphosphate = cyclic pyranopterin phosphate + diphosphate. It participates in cofactor biosynthesis; molybdopterin biosynthesis. Catalyzes the conversion of (8S)-3',8-cyclo-7,8-dihydroguanosine 5'-triphosphate to cyclic pyranopterin monophosphate (cPMP). This is Cyclic pyranopterin monophosphate synthase from Saccharophagus degradans (strain 2-40 / ATCC 43961 / DSM 17024).